Consider the following 203-residue polypeptide: LexA repressor (203 aa).

Positions 28–48 (RAEIASQLGFRSPNAAEEHLK) form a DNA-binding region, H-T-H motif. Catalysis depends on for autocatalytic cleavage activity residues Ser120 and Lys157.

This sequence belongs to the peptidase S24 family. Homodimer.

The enzyme catalyses Hydrolysis of Ala-|-Gly bond in repressor LexA.. Represses a number of genes involved in the response to DNA damage (SOS response), including recA and lexA. Binds to the 16 bp palindromic sequence 5'-CTGTATATATATACAG-3'. In the presence of single-stranded DNA, RecA interacts with LexA causing an autocatalytic cleavage which disrupts the DNA-binding part of LexA, leading to derepression of the SOS regulon and eventually DNA repair. The protein is LexA repressor of Proteus mirabilis (strain HI4320).